The chain runs to 357 residues: Putative DNA directed RNA polymerase subunit R470 (357 aa).

The protein belongs to the archaeal Rpo11/eukaryotic RPB11/RPC19 RNA polymerase subunit family.

Its subcellular location is the virion. It carries out the reaction RNA(n) + a ribonucleoside 5'-triphosphate = RNA(n+1) + diphosphate. The polypeptide is Putative DNA directed RNA polymerase subunit R470 (Acanthamoeba polyphaga mimivirus (APMV)).